A 186-amino-acid chain; its full sequence is MSFLTNFLLGLGLAMDAFAVSMSSGTTVRPFKVSDALKLAVFFGGFQALMPVLGWVGGSAVSGFVSDYAPWIAFGLLAFIGGKMIYEALYGDPDGKVNSLNYSMLFLLAVATSIDALAVGISFAFLGTPILEPVIIIGCVTFVMSFCGAVLGYRIGHFFENEVEILGGLILIGLGVKILAEHMDWI.

6 consecutive transmembrane segments (helical) span residues 1-21, 41-61, 62-82, 105-127, 139-159, and 163-183; these read MSFLTNFLLGLGLAMDAFAVS, VFFGGFQALMPVLGWVGGSAV, SGFVSDYAPWIAFGLLAFIGG, LFLLAVATSIDALAVGISFAFLG, CVTFVMSFCGAVLGYRIGHFF, and VEILGGLILIGLGVKILAEHM.

The protein belongs to the MntP (TC 9.B.29) family.

Its subcellular location is the cell membrane. In terms of biological role, probably functions as a manganese efflux pump. This is Putative manganese efflux pump MntP from Methanosarcina mazei (strain ATCC BAA-159 / DSM 3647 / Goe1 / Go1 / JCM 11833 / OCM 88) (Methanosarcina frisia).